We begin with the raw amino-acid sequence, 189 residues long: HTH-type transcriptional repressor AcnR (189 aa).

Positions 10-70 (AERKVEILSG…EVAHEDMRKM (61 aa)) constitute an HTH tetR-type domain. A DNA-binding region (H-T-H motif) is located at residues 33 to 52 (TVARLEETIGKSRGAIFHHY). Residues 79–80 (LI), Arg-130, and Gln-134 contribute to the citrate site. Glu-181 lines the Mg(2+) pocket. Citrate is bound at residue Arg-185.

In terms of assembly, homodimer.

Its function is as follows. AcnR negatively controls the expression of the aconitase gene acn. This Corynebacterium jeikeium (strain K411) protein is HTH-type transcriptional repressor AcnR.